A 287-amino-acid chain; its full sequence is Glutamate racemase (287 aa).

Substrate contacts are provided by residues 32–33 (DS) and 64–65 (YG). Cysteine 96 functions as the Proton donor/acceptor in the catalytic mechanism. 97–98 (NT) provides a ligand contact to substrate. Cysteine 208 serves as the catalytic Proton donor/acceptor. 209–210 (TH) contributes to the substrate binding site.

This sequence belongs to the aspartate/glutamate racemases family.

It catalyses the reaction L-glutamate = D-glutamate. It participates in cell wall biogenesis; peptidoglycan biosynthesis. Its function is as follows. Provides the (R)-glutamate required for cell wall biosynthesis. In Photorhabdus laumondii subsp. laumondii (strain DSM 15139 / CIP 105565 / TT01) (Photorhabdus luminescens subsp. laumondii), this protein is Glutamate racemase.